The sequence spans 222 residues: Putative RING finger protein ORF118 (222 aa).

The RING-type zinc-finger motif lies at 78-114 (CCICMAKNNRKEALPCQHNVCRDCYYKPMRNNCPVCN). The interval 184-222 (IENRIHNNNNNNYDENNPDDLPVIHPPRRRHRQTAHISI) is disordered. Residues 189 to 198 (HNNNNNNYDE) show a composition bias toward low complexity. Over residues 209 to 222 (PPRRRHRQTAHISI) the composition is skewed to basic residues.

This Magallana gigas (Pacific oyster) protein is Putative RING finger protein ORF118.